A 248-amino-acid polypeptide reads, in one-letter code: Probable transcriptional regulatory protein FTL_0929 (248 aa).

The protein belongs to the TACO1 family.

The protein resides in the cytoplasm. The protein is Probable transcriptional regulatory protein FTL_0929 of Francisella tularensis subsp. holarctica (strain LVS).